The sequence spans 282 residues: tRNA U34 carboxymethyltransferase (282 aa).

Residues Lys54, Trp68, Lys73, Gly92, Asp114 to Ser116, Tyr161, and Arg276 contribute to the carboxy-S-adenosyl-L-methionine site.

The protein belongs to the class I-like SAM-binding methyltransferase superfamily. CmoB family. In terms of assembly, homotetramer.

It catalyses the reaction carboxy-S-adenosyl-L-methionine + 5-hydroxyuridine(34) in tRNA = 5-carboxymethoxyuridine(34) in tRNA + S-adenosyl-L-homocysteine + H(+). Its function is as follows. Catalyzes carboxymethyl transfer from carboxy-S-adenosyl-L-methionine (Cx-SAM) to 5-hydroxyuridine (ho5U) to form 5-carboxymethoxyuridine (cmo5U) at position 34 in tRNAs. In Campylobacter fetus subsp. fetus (strain 82-40), this protein is tRNA U34 carboxymethyltransferase.